The following is a 102-amino-acid chain: NADH-quinone oxidoreductase subunit K (102 aa).

Helical transmembrane passes span 6–26, 30–50, and 62–82; these read LEHGLAVAGVLFCLGLVGLMV, ILFVLMSLEIMMNAAALAFVV, and VMFILVISLAAAEASIGLAIL.

It belongs to the complex I subunit 4L family. NDH-1 is composed of 13 different subunits. Subunits NuoA, H, J, K, L, M, N constitute the membrane sector of the complex.

It localises to the cell inner membrane. It catalyses the reaction a quinone + NADH + 5 H(+)(in) = a quinol + NAD(+) + 4 H(+)(out). Its function is as follows. NDH-1 shuttles electrons from NADH, via FMN and iron-sulfur (Fe-S) centers, to quinones in the respiratory chain. The immediate electron acceptor for the enzyme in this species is believed to be ubiquinone. Couples the redox reaction to proton translocation (for every two electrons transferred, four hydrogen ions are translocated across the cytoplasmic membrane), and thus conserves the redox energy in a proton gradient. In Pseudomonas syringae pv. tomato (strain ATCC BAA-871 / DC3000), this protein is NADH-quinone oxidoreductase subunit K.